The chain runs to 528 residues: Na(+)/H(+) antiporter NhaB (528 aa).

11 consecutive transmembrane segments (helical) span residues 23–43 (VAII…NPFV), 45–65 (GWLL…CYPL), 90–110 (LVAN…IYFM), 136–156 (CFAA…AVVI), 204–224 (LLMH…VGEP), 237–257 (FGEF…CGLI), 305–325 (GIIA…VGLI), 350–370 (EEAL…AVII), 392–412 (LALF…VFVG), 450–470 (ATPN…APLI), and 479–499 (VMAL…IMFF).

The protein belongs to the NhaB Na(+)/H(+) (TC 2.A.34) antiporter family.

The protein resides in the cell inner membrane. The enzyme catalyses 2 Na(+)(in) + 3 H(+)(out) = 2 Na(+)(out) + 3 H(+)(in). In terms of biological role, na(+)/H(+) antiporter that extrudes sodium in exchange for external protons. Can also transport lithium and potassium. The sequence is that of Na(+)/H(+) antiporter NhaB from Vibrio parahaemolyticus serotype O3:K6 (strain RIMD 2210633).